We begin with the raw amino-acid sequence, 150 residues long: MGMGMMEVHLISGKGLQAHDPLNKPIDPYAEINFKGQERMSKVAKNAGPNPLWDEKFKFLAEYPGSGGDFHILFKVMDHDAIDGDDYIGDVKIDVKNLLAEGVRKGKSEMPPRMYHVLAHKIHFKGEIEVGVSFKLQGGGGCGGCYPWEN.

A C2 domain is found at 1-108 (MGMGMMEVHL…LAEGVRKGKS (108 aa)). Residues Asp20, Asp27, Asp78, Asp80, and Asp86 each coordinate Ca(2+).

Requires Ca(2+) as cofactor. Sieve elements of leaves, stems, roots and flowers.

Binds to both sense and antisense RNA. Interacts with mesophyll plasmodesmata to mediate its own cell-to-cell transport and potentiate RNA trafficking. This is 16 kDa phloem protein 1 (PP16-1) from Cucurbita maxima (Pumpkin).